We begin with the raw amino-acid sequence, 321 residues long: Glucan 1,3-beta-glucosidase (321 aa).

A signal peptide spans 1-21; that stretch reads MQFLSSFVFAALALLPLSAMA. 2 N-linked (GlcNAc...) asparagine glycosylation sites follow: asparagine 39 and asparagine 99. Glutamate 141 functions as the Proton donor in the catalytic mechanism. 3 N-linked (GlcNAc...) asparagine glycosylation sites follow: asparagine 210, asparagine 213, and asparagine 237. Glutamate 244 functions as the Nucleophile in the catalytic mechanism. N-linked (GlcNAc...) asparagine glycosylation is found at asparagine 309 and asparagine 317.

The protein belongs to the glycosyl hydrolase 17 family.

It localises to the secreted. Its subcellular location is the cell wall. It catalyses the reaction Successive hydrolysis of beta-D-glucose units from the non-reducing ends of (1-&gt;3)-beta-D-glucans, releasing alpha-glucose.. Its function is as follows. Glucanases possibly play a role in cell expansion during growth, in cell-cell fusion during mating, and in spore release during sporulation. This enzyme may be involved in beta-glucan degradation and also function biosynthetically as a transglycosylase. The sequence is that of Glucan 1,3-beta-glucosidase (bgl2) from Schizosaccharomyces pombe (strain 972 / ATCC 24843) (Fission yeast).